Here is a 352-residue protein sequence, read N- to C-terminus: Proton-activated chloride channel (352 aa).

The segment at 1–55 (MEAIRKELSRSYQELNEEAEPVAIDPEEAEDEEKEQEEAASAVAPDRDSDRSSPP) is disordered. The Cytoplasmic segment spans residues 1-65 (MEAIRKELSR…VRFSRTCLKN (65 aa)). Positions 15 to 38 (LNEEAEPVAIDPEEAEDEEKEQEE) are enriched in acidic residues. A helical transmembrane segment spans residues 66–86 (FFSVLLILVYLLLMGVAVFLV). At 87–299 (YQTITDFRDK…KDPYIQEIQD (213 aa)) the chain is on the extracellular side. The helical transmembrane segment at 300–320 (IITANPWSMIALLCSVFLVLF) threads the bilayer. Residues 321–352 (KAADFAKLSVKWMIKVRRRHLKKRARELNHIS) are Cytoplasmic-facing.

The protein belongs to the proton-activated chloride channel family.

The protein resides in the cell membrane. It catalyses the reaction chloride(in) = chloride(out). Its function is as follows. Chloride channel gated by pH that facilitates the entry of chloride ions into cells upon exposure to extracellular acidic pH. This chain is Proton-activated chloride channel, found in Xenopus tropicalis (Western clawed frog).